The following is a 116-amino-acid chain: SGSCSLKTCWLQLADFRKVGDLLKEKYDSAAAMKITRKGKLELVNSRFNPPTPDDLVYLDQSPDYCVKNKSTGSLGTMGRLCNKTSEGMDGCELMCCGRGYDQFKTVQVERCHCKF.

S1 carries the O-palmitoleoyl serine; by PORCN lipid modification. N-linked (GlcNAc...) asparagine glycans are attached at residues N69 and N83. The cysteines at positions 82 and 97 are disulfide-linked.

It belongs to the Wnt family. Palmitoleoylation is required for efficient binding to frizzled receptors. Depalmitoleoylation leads to Wnt signaling pathway inhibition.

It localises to the secreted. The protein resides in the extracellular space. Its subcellular location is the extracellular matrix. Ligand for members of the frizzled family of seven transmembrane receptors. Probable developmental protein. May be a signaling molecule which affects the development of discrete regions of tissues. Is likely to signal over only few cell diameters. The polypeptide is Protein Wnt-5b (WNT-5B) (Alopias vulpinus (Common thresher shark)).